The primary structure comprises 194 residues: MEFPDLGKHCSEKTCKQLDFLPVKCDACKQDFCKDHFTYAAHKCPFAFQKDVHVPVCPLCNTPIPVKKGQIPDVVVGDHIDRDCDSHPGKKKEKIFTYRCSKEGCKKKEMLQMSCAQCHGNFCIQHRHPLDHSCRHGSRPTIKAGCSPVTASESKPSGDPHPGSWRAVPATQVLVHPAHVNAVTSVWGAAALGW.

2 AN1-type zinc fingers span residues Pro4–Val52 and Lys94–Ile142. Positions 10, 15, 25, 28, 33, 36, 42, 44, 100, 105, 115, 118, 123, 126, 132, and 134 each coordinate Zn(2+). The interval Gly145 to Ser164 is disordered.

The protein localises to the cytoplasm. Its subcellular location is the nucleus. In Pongo abelii (Sumatran orangutan), this protein is AN1-type zinc finger protein 2A (ZFAND2A).